Reading from the N-terminus, the 292-residue chain is MTVDRAPRITDGDTRLSFGSNLSSFSEYLRVHAPEHLPQNRFADTGGVVMGGGDVAPHGTTIVAISYAGGVLLAGDRRATMGNLIASRDVQKVYVTDDYSAAGIAGTAGIAIELVRLFAVELEHYEKIEGVPLTFDGKANRLSSMVRGNLGAAMQGLAVVPLLVGYDLDAVDPSRAGRIVSYDVVGGRYEERAGYHAVGSGSLFAKSALKKLYSPGIDEDTALRFAVEALYDAADDDSATGGPDLTRGIYPTAVTITSAGAVELSTAKAAEIAREIVAARTATASPEGESAL.

Positions 1-59 (MTVDRAPRITDGDTRLSFGSNLSSFSEYLRVHAPEHLPQNRFADTGGVVMGGGDVAPHG) are cleaved as a propeptide — removed in mature form; by autocatalysis. Thr60 acts as the Nucleophile in catalysis.

The protein belongs to the peptidase T1B family. As to quaternary structure, the 20S proteasome core is composed of 14 alpha and 14 beta subunits that assemble into four stacked heptameric rings, resulting in a barrel-shaped structure. The two inner rings, each composed of seven catalytic beta subunits, are sandwiched by two outer rings, each composed of seven alpha subunits. All four combinations of alpha- and beta-subunits (beta2-alpha1, beta2-alpha2, beta1-alpha2 and beta1-alpha1) yield fully assembled and proteolytically active proteasomes. The catalytic chamber with the active sites is on the inside of the barrel. Has probably a gated structure, the ends of the cylinder being occluded by the N-termini of the alpha-subunits. Is likely capped by the proteasome-associated ATPase, ARC.

It localises to the cytoplasm. It catalyses the reaction Cleavage of peptide bonds with very broad specificity.. It participates in protein degradation; proteasomal Pup-dependent pathway. Its activity is regulated as follows. The formation of the proteasomal ATPase ARC-20S proteasome complex, likely via the docking of the C-termini of ARC into the intersubunit pockets in the alpha-rings, may trigger opening of the gate for substrate entry. Interconversion between the open-gate and close-gate conformations leads to a dynamic regulation of the 20S proteasome proteolysis activity. In terms of biological role, component of the proteasome core, a large protease complex with broad specificity involved in protein degradation. The R.erythropolis proteasomes are able to cleave oligopeptides after Tyr, Phe and Leu, very poorly after Arg but not after Glu. Thus, displays chymotrypsin-like activity, low trypsin-like activity but no caspase-like activity. The polypeptide is Proteasome subunit beta 2 (Rhodococcus erythropolis (Arthrobacter picolinophilus)).